Consider the following 45-residue polypeptide: Natriuretic peptide OsNP-d (45 aa).

Positions 1 to 5 (PAAGL) are excised as a propeptide. Cysteines 14 and 30 form a disulfide.

Belongs to the natriuretic peptide family. Expressed by the venom gland.

The protein resides in the secreted. Snake venom natriuretic peptide that targets both NPR1 and NPR2. Exhibits hypotensive and vasodepressor activities. The sequence is that of Natriuretic peptide OsNP-d from Oxyuranus scutellatus scutellatus (Australian taipan).